The chain runs to 243 residues: Vesicle-associated membrane protein-associated protein B (243 aa).

Ala-2 bears the N-acetylalanine mark. Residues 2 to 218 are Cytoplasmic-facing; it reads AKVEQVLSLE…PASAMAGKEE (217 aa). The 118-residue stretch at 7–124 folds into the MSP domain; that stretch reads VLSLEPQHEL…MDSKLRCVFE (118 aa). Ser-146 carries the phosphoserine modification. Lys-147 participates in a covalent cross-link: Glycyl lysine isopeptide (Lys-Gly) (interchain with G-Cter in SUMO1). The residue at position 150 (Thr-150) is a Phosphothreonine. Phosphoserine occurs at positions 158, 159, and 160. Residues 161–196 are a coiled coil; the sequence is LDDTEVKKVMEECKRLQSEVQRLREENKQFKEEDGL. Residues 186–197 show a composition bias toward basic and acidic residues; the sequence is ENKQFKEEDGLR. Residues 186-214 form a disordered region; it reads ENKQFKEEDGLRMRKTAQSNSPAPASAMA. Phosphoserine is present on Ser-206. Residues 219 to 239 form a helical; Anchor for type IV membrane protein membrane-spanning segment; sequence GLSTRLLALVVLFFIVGVIIG.

Belongs to the VAMP-associated protein (VAP) (TC 9.B.17) family. Homodimer, and heterodimer with VAPA. Interacts with VAMP1 and VAMP2. Interacts (via MSP domain) with ZFYVE27. Interacts with RMDN3. Interacts with KIF5A in a ZFYVE27-dependent manner. Interacts (via MSP domain) with STARD3 (via phospho-FFAT motif). Interacts with STARD3NL (via FFAT motif). Interacts with CERT1. Interacts with PLEKHA3 and SACM1L to form a ternary complex. Interacts with VPS13A (via FFAT motif). Interacts with RB1CC1 (via phosphorylated FFAT motif), MIGA2 (via phosphorylated FFAT motif), RMDN3 (via phosphorylated FFAT motif), OSBPL1A (via FFAT motif), KCNB1 (via phosphorylated FFAT motif) and KCNB2 (via phosphorylated FFAT motif). Interacts (via MSP domain) with WDR44 (via FFAT motif); the interactions connect the endoplasmic reticulum (ER) with the endosomal tubule.

It localises to the endoplasmic reticulum membrane. In terms of biological role, endoplasmic reticulum (ER)-anchored protein that mediates the formation of contact sites between the ER and endosomes via interaction with FFAT motif-containing proteins such as STARD3 or WDR44. Interacts with STARD3 in a FFAT motif phosphorylation dependent manner. Via interaction with WDR44 participates in neosynthesized protein export. Participates in the endoplasmic reticulum unfolded protein response (UPR) by inducing ERN1/IRE1 activity. Involved in cellular calcium homeostasis regulation. This chain is Vesicle-associated membrane protein-associated protein B, found in Bos taurus (Bovine).